A 461-amino-acid chain; its full sequence is Putative aldehyde dehydrogenase FUS7 (461 aa).

NAD(+) is bound at residue 220–225; the sequence is GSTTTG. Catalysis depends on residues Glu-242 and Cys-276.

This sequence belongs to the aldehyde dehydrogenase family.

It carries out the reaction an aldehyde + NAD(+) + H2O = a carboxylate + NADH + 2 H(+). In terms of biological role, putative aldehyde dehydrogenase; part of the gene cluster that mediates the biosynthesis of the mycotoxin fusarin C. Within the cluster, FUS1, FUS2, FUS8 and FUS9 are sufficient for fusarin production. The other FUS cluster members are not essential for fusarin C biosynthesis. The protein is Putative aldehyde dehydrogenase FUS7 of Gibberella fujikuroi (strain CBS 195.34 / IMI 58289 / NRRL A-6831) (Bakanae and foot rot disease fungus).